The primary structure comprises 255 residues: Serine/threonine-protein phosphatase PP1 (255 aa).

Mn(2+) is bound by residues D2, H4, D30, and N62. H63 serves as the catalytic Proton donor. Residues H111 and H186 each contribute to the Mn(2+) site.

It belongs to the PPP phosphatase family. PP-1 subfamily. Mn(2+) serves as cofactor.

It carries out the reaction O-phospho-L-seryl-[protein] + H2O = L-seryl-[protein] + phosphate. The enzyme catalyses O-phospho-L-threonyl-[protein] + H2O = L-threonyl-[protein] + phosphate. The sequence is that of Serine/threonine-protein phosphatase PP1 from Brassica napus (Rape).